A 444-amino-acid polypeptide reads, in one-letter code: Tubulin beta chain (444 aa).

Positions 1-4 (MREI) match the MREI motif motif. Positions 11, 69, 138, 142, 143, 144, 204, and 226 each coordinate GTP. Glutamate 69 is a Mg(2+) binding site. The tract at residues 421-444 (EYQQYQDATAEEEEDFNEEAEEEA) is disordered. Positions 429-444 (TAEEEEDFNEEAEEEA) are enriched in acidic residues. Glutamate 438 carries the 5-glutamyl polyglutamate modification.

Belongs to the tubulin family. As to quaternary structure, dimer of alpha and beta chains. A typical microtubule is a hollow water-filled tube with an outer diameter of 25 nm and an inner diameter of 15 nM. Alpha-beta heterodimers associate head-to-tail to form protofilaments running lengthwise along the microtubule wall with the beta-tubulin subunit facing the microtubule plus end conferring a structural polarity. Microtubules usually have 13 protofilaments but different protofilament numbers can be found in some organisms and specialized cells. The cofactor is Mg(2+). In terms of processing, some glutamate residues at the C-terminus are polyglycylated, resulting in polyglycine chains on the gamma-carboxyl group. Glycylation is mainly limited to tubulin incorporated into axonemes (cilia and flagella) whereas glutamylation is prevalent in neuronal cells, centrioles, axonemes, and the mitotic spindle. Both modifications can coexist on the same protein on adjacent residues, and lowering polyglycylation levels increases polyglutamylation, and reciprocally. The precise function of polyglycylation is still unclear. Post-translationally, some glutamate residues at the C-terminus are polyglutamylated, resulting in polyglutamate chains on the gamma-carboxyl group. Polyglutamylation plays a key role in microtubule severing by spastin (SPAST). SPAST preferentially recognizes and acts on microtubules decorated with short polyglutamate tails: severing activity by SPAST increases as the number of glutamates per tubulin rises from one to eight, but decreases beyond this glutamylation threshold.

It localises to the cytoplasm. The protein resides in the cytoskeleton. Tubulin is the major constituent of microtubules, a cylinder consisting of laterally associated linear protofilaments composed of alpha- and beta-tubulin heterodimers. Microtubules grow by the addition of GTP-tubulin dimers to the microtubule end, where a stabilizing cap forms. Below the cap, tubulin dimers are in GDP-bound state, owing to GTPase activity of alpha-tubulin. The polypeptide is Tubulin beta chain (tubb) (Xenopus laevis (African clawed frog)).